The sequence spans 329 residues: Ficolin-2 (329 aa).

Residues 1–29 (MELGGAAGALGPSGPLLVCLCFGTLAAQA) form the signal peptide. Residues 52–111 (GCPGLPGAPGLKGETGAAGLKGERGLPGVPGKAGPAGPKGSTGAQGEKGARGEKGESGQL) enclose the Collagen-like domain. Residues 64–113 (GETGAAGLKGERGLPGVPGKAGPAGPKGSTGAQGEKGARGEKGESGQLHS) form a disordered region. Positions 77–90 (LPGVPGKAGPAGPK) are enriched in low complexity. The region spanning 112-329 (HSCATGPRTC…KVSEMKLRLT (218 aa)) is the Fibrinogen C-terminal domain. Intrachain disulfides connect Cys114–Cys142 and Cys121–Cys149. Positions 265, 267, 269, and 271 each coordinate Ca(2+). Cys273 and Cys286 are disulfide-bonded. Residue Asn316 is glycosylated (N-linked (GlcNAc...) asparagine).

This sequence belongs to the ficolin lectin family. As to quaternary structure, homotrimer. Interacts with elastin. Interacts with MASP1 and MASP2.

It localises to the secreted. In terms of biological role, may function in innate immunity through activation of the lectin complement pathway. Calcium-dependent and GlcNAc-binding lectin. This Bos taurus (Bovine) protein is Ficolin-2 (FCN2).